We begin with the raw amino-acid sequence, 389 residues long: Type II methyltransferase M2.BsuMI (389 aa).

One can recognise an SAM-dependent MTase C5-type domain in the interval 1-299; it reads MKVVSLFSGI…ENLSQPKGSI (299 aa). Cysteine 69 is an active-site residue.

The protein belongs to the class I-like SAM-binding methyltransferase superfamily. C5-methyltransferase family. Monomer. May form a complex with YdiP, also seems to be active alone.

It catalyses the reaction a 2'-deoxycytidine in DNA + S-adenosyl-L-methionine = a 5-methyl-2'-deoxycytidine in DNA + S-adenosyl-L-homocysteine + H(+). With respect to regulation, somewhat inhibited by MgCl(2) and spermidine, strongly inhibited by MnCl(2). Functionally, a methylase, recognizes the double-stranded sequence 5'-YTCGAR-3', methylates C-3 on both strands, and protects the DNA from cleavage by the BsuMI endonuclease. The sequence is that of Type II methyltransferase M2.BsuMI (ydiP) from Bacillus subtilis (strain 168).